Consider the following 393-residue polypeptide: NAD(P)H-quinone oxidoreductase subunit H, chloroplastic (393 aa).

The protein belongs to the complex I 49 kDa subunit family. As to quaternary structure, NDH is composed of at least 16 different subunits, 5 of which are encoded in the nucleus.

Its subcellular location is the plastid. It localises to the chloroplast thylakoid membrane. The catalysed reaction is a plastoquinone + NADH + (n+1) H(+)(in) = a plastoquinol + NAD(+) + n H(+)(out). It carries out the reaction a plastoquinone + NADPH + (n+1) H(+)(in) = a plastoquinol + NADP(+) + n H(+)(out). Functionally, NDH shuttles electrons from NAD(P)H:plastoquinone, via FMN and iron-sulfur (Fe-S) centers, to quinones in the photosynthetic chain and possibly in a chloroplast respiratory chain. The immediate electron acceptor for the enzyme in this species is believed to be plastoquinone. Couples the redox reaction to proton translocation, and thus conserves the redox energy in a proton gradient. The protein is NAD(P)H-quinone oxidoreductase subunit H, chloroplastic of Nuphar advena (Common spatterdock).